A 492-amino-acid polypeptide reads, in one-letter code: Trypanothione reductase (492 aa).

35-52 (DVQTVHGPPFFAALGGTC) lines the FAD pocket. Cys52 and Cys57 form a disulfide bridge. His461 (proton acceptor) is an active-site residue.

Belongs to the class-I pyridine nucleotide-disulfide oxidoreductase family. As to quaternary structure, homodimer. FAD is required as a cofactor.

The protein resides in the cytoplasm. The catalysed reaction is trypanothione + NADP(+) = trypanothione disulfide + NADPH + H(+). Functionally, trypanothione is the parasite analog of glutathione; this enzyme is the equivalent of glutathione reductase. This chain is Trypanothione reductase (TPR), found in Trypanosoma congolense.